We begin with the raw amino-acid sequence, 156 residues long: Large ribosomal subunit protein uL15 (156 aa).

Over residues Met1–Gly11 the composition is skewed to basic and acidic residues. Residues Met1–Val44 are disordered. Positions Arg21–Val35 are enriched in gly residues.

It belongs to the universal ribosomal protein uL15 family. In terms of assembly, part of the 50S ribosomal subunit.

Its function is as follows. Binds to the 23S rRNA. The polypeptide is Large ribosomal subunit protein uL15 (Brucella abortus (strain S19)).